The sequence spans 86 residues: Exodeoxyribonuclease 7 small subunit (86 aa).

Positions 67–86 are disordered; it reads LSDPAQPEASEPFDPPSHDG.

The protein belongs to the XseB family. As to quaternary structure, heterooligomer composed of large and small subunits.

It is found in the cytoplasm. The enzyme catalyses Exonucleolytic cleavage in either 5'- to 3'- or 3'- to 5'-direction to yield nucleoside 5'-phosphates.. Its function is as follows. Bidirectionally degrades single-stranded DNA into large acid-insoluble oligonucleotides, which are then degraded further into small acid-soluble oligonucleotides. This is Exodeoxyribonuclease 7 small subunit from Stenotrophomonas maltophilia (strain K279a).